Reading from the N-terminus, the 252-residue chain is MTSNLYYVLISPYSLAYMVQYRSVTTAAGECRGDMWAVCARISSDVTCARHANLQRSIRRCFYIRSTMCEIMLLRDHGDYPVASRMKVIVWDEELAALAKRHTQGCVPEAYKCRHTLRFWTPGQLNFEFYADKMPFTMSLISTAIKRGHMQKHNITRDIVEKYQPVGPKGNVKELALAIFDRVTAVGCGLTTWKLGGKARAFFTCNFFSENDYNRPVYKTGNSPGEKCIKKDETFKNLCFAQEPINPNEHNL.

Positions 1 to 23 (MTSNLYYVLISPYSLAYMVQYRS) are cleaved as a signal peptide. The short motif at 32–34 (RGD) is the Cell attachment site element. In terms of domain architecture, SCP spans 63 to 207 (YIRSTMCEIM…KARAFFTCNF (145 aa)).

This sequence belongs to the CRISP family. In terms of tissue distribution, expressed in salivary glands.

It is found in the secreted. Its function is as follows. Inhibits platelet aggregation induced by all agonists tested (ADP, arachidonic acid, the thromboxane A2 analog U46619, thrombin, and snake venom snaclecs (TMVA that activates platelet through GPIB, and stejnulxin that specifically acts through GPVI (GP6))). May act by competing with fibrinogen for binding to glycoprotein IIb/IIIa (ITGA2B/ITGB3). The sequence is that of Tabinhibitin 9 from Tabanus yao (Horsefly).